A 63-amino-acid chain; its full sequence is Large ribosomal subunit protein bL28 (63 aa).

Belongs to the bacterial ribosomal protein bL28 family.

This chain is Large ribosomal subunit protein bL28, found in Heliobacterium modesticaldum (strain ATCC 51547 / Ice1).